The primary structure comprises 283 residues: Pantothenate synthetase (283 aa).

An ATP-binding site is contributed by 30 to 37 (MGYLHEGH). Catalysis depends on H37, which acts as the Proton donor. Q61 is a (R)-pantoate binding site. Q61 serves as a coordination point for beta-alanine. 147-150 (GLKD) serves as a coordination point for ATP. (R)-pantoate is bound at residue Q153. Residues V176 and 184–187 (KSSR) contribute to the ATP site.

This sequence belongs to the pantothenate synthetase family. In terms of assembly, homodimer.

It localises to the cytoplasm. The enzyme catalyses (R)-pantoate + beta-alanine + ATP = (R)-pantothenate + AMP + diphosphate + H(+). It participates in cofactor biosynthesis; (R)-pantothenate biosynthesis; (R)-pantothenate from (R)-pantoate and beta-alanine: step 1/1. In terms of biological role, catalyzes the condensation of pantoate with beta-alanine in an ATP-dependent reaction via a pantoyl-adenylate intermediate. The sequence is that of Pantothenate synthetase from Halalkalibacterium halodurans (strain ATCC BAA-125 / DSM 18197 / FERM 7344 / JCM 9153 / C-125) (Bacillus halodurans).